The following is a 457-amino-acid chain: Fibrinogen C domain-containing protein 1-A (457 aa).

The interval 1–20 (MGSDRWKNIGGTPQMEDSAQ) is disordered. Over 1–33 (MGSDRWKNIGGTPQMEDSAQEKTQRKGCGYILC) the chain is Cytoplasmic. Residues 34–54 (TVLLSVAVLLAVTVTGAVLFM) form a helical; Signal-anchor for type II membrane protein membrane-spanning segment. The Extracellular segment spans residues 55 to 457 (NHYHAPSTEP…MKIRPQREEN (403 aa)). Residues 216–235 (ADLQRAPSRNSRPRGCANGS) are disordered. The Fibrinogen C-terminal domain occupies 231–454 (CANGSKPRDC…FTEMKIRPQR (224 aa)). An N-linked (GlcNAc...) asparagine glycan is attached at N233. Residues C240 and C269 are joined by a disulfide bond. A glycan (N-linked (GlcNAc...) asparagine) is linked at N336. Positions 389 and 391 each coordinate Ca(2+). C397 and C410 are oxidised to a cystine.

Homotetramer; disulfide-linked.

It localises to the membrane. In terms of biological role, acetyl group-binding receptor which shows a calcium-dependent binding to acetylated structures such as chitin, some N-acetylated carbohydrates, and amino acids. This is Fibrinogen C domain-containing protein 1-A (fibcd1-a) from Xenopus laevis (African clawed frog).